A 244-amino-acid chain; its full sequence is MLKQSEAIVLRTYPMREADLLVTLFTRAEGKIKGVAKAAKKSRRRFGGALEPLTHVRVYYEDRERQELTRLDSCDVLASPMSAEVDYPRALALGHVAEVIDDLLPDREPNDAVFRLSLAVLGQLVPGAVWMPLTYFDLWMVRLAGFLPDLMHCVVCGEELDDRAFFHPLVDGLVCANDKRLASTELTVESRAIADLMFRAPLENFAGAPWPRQRCADLRRFLVQILERHLEKKLVTVTMLDKLD.

Belongs to the RecO family.

Functionally, involved in DNA repair and RecF pathway recombination. In Koribacter versatilis (strain Ellin345), this protein is DNA repair protein RecO.